The following is a 431-amino-acid chain: Islet cell autoantigen 1-like protein (431 aa).

An AH domain is found at 44–247; the sequence is ASDAELDAKL…TAQMMTQIQE (204 aa). Disordered stretches follow at residues 295–316 and 351–372; these read EEEE…PRDS and CGSP…SLTS. Over residues 301–316 the composition is skewed to basic and acidic residues; sequence RFEREPAVARALPRDS. Residues 356–372 are compositionally biased toward polar residues; sequence TGLTSQEPSVGPGSLTS.

The protein is Islet cell autoantigen 1-like protein (Ica1l) of Mus musculus (Mouse).